A 323-amino-acid polypeptide reads, in one-letter code: MIDFGNFYSLIAKNHLSHWLETLPAQIANWQREQQHGLFKQWSNAVEFLPEIKPYRLDLLHSVTAESEEPLSTGQIKRIETLMRNLMPWRKGPFSLYGVNIDTEWRSDWKWDRVLPHLSDLTGRTILDVGCGSGYHMWRMIGAGAHLAVGIDPTQLFLCQFEAVRKLLGNDQRAHLLPLGIEQLPALKAFDTVFSMGVLYHRRSPLEHLWQLKDQLVNEGELVLETLVIDGDENTVLVPGDRYAQMRNVYFIPSALALKNWLKKCGFVDIRIVDVCVTTTEEQRRTEWMVTESLSDFLDPHDPSKTVEGYPAPKRAVLIARKP.

Carboxy-S-adenosyl-L-methionine-binding positions include Lys-91, Trp-105, Lys-110, Gly-130, 152–154 (DPT), 181–182 (IE), Met-196, Tyr-200, and Arg-315.

Belongs to the class I-like SAM-binding methyltransferase superfamily. CmoB family. As to quaternary structure, homotetramer.

The catalysed reaction is carboxy-S-adenosyl-L-methionine + 5-hydroxyuridine(34) in tRNA = 5-carboxymethoxyuridine(34) in tRNA + S-adenosyl-L-homocysteine + H(+). In terms of biological role, catalyzes carboxymethyl transfer from carboxy-S-adenosyl-L-methionine (Cx-SAM) to 5-hydroxyuridine (ho5U) to form 5-carboxymethoxyuridine (cmo5U) at position 34 in tRNAs. The polypeptide is tRNA U34 carboxymethyltransferase (Escherichia coli O8 (strain IAI1)).